Reading from the N-terminus, the 428-residue chain is Tyrosine--tRNA ligase (428 aa).

Tyrosine 41 provides a ligand contact to L-tyrosine. Residues 46–55 carry the 'HIGH' region motif; that stretch reads PTADSLHLGH. Residues tyrosine 179 and glutamine 183 each contribute to the L-tyrosine site. The 'KMSKS' region motif lies at 239–243; it reads KFGKT. Lysine 242 provides a ligand contact to ATP. The S4 RNA-binding domain occupies 361–418; it reads ADLMQALVDSELQPSRGQARKTIASNAVTINGEKQSDPEYFFQDSDILFGRYTLLRRG.

It belongs to the class-I aminoacyl-tRNA synthetase family. TyrS type 1 subfamily. Homodimer.

Its subcellular location is the cytoplasm. The enzyme catalyses tRNA(Tyr) + L-tyrosine + ATP = L-tyrosyl-tRNA(Tyr) + AMP + diphosphate + H(+). Catalyzes the attachment of tyrosine to tRNA(Tyr) in a two-step reaction: tyrosine is first activated by ATP to form Tyr-AMP and then transferred to the acceptor end of tRNA(Tyr). The chain is Tyrosine--tRNA ligase from Citrobacter koseri (strain ATCC BAA-895 / CDC 4225-83 / SGSC4696).